We begin with the raw amino-acid sequence, 96 residues long: Large ribosomal subunit protein eL14 (96 aa).

This sequence belongs to the eukaryotic ribosomal protein eL14 family.

This chain is Large ribosomal subunit protein eL14, found in Metallosphaera sedula (strain ATCC 51363 / DSM 5348 / JCM 9185 / NBRC 15509 / TH2).